A 40-amino-acid polypeptide reads, in one-letter code: Ostricacin-3 (40 aa).

Intrachain disulfides connect Cys-8–Cys-36, Cys-15–Cys-30, and Cys-20–Cys-37.

The protein resides in the secreted. Has antibacterial activity against the Gram-positive bacterium S.aureus 1056 MRSA (MIC=2.78 ug/ml) and the Gram-negative bacterium E.coli O157:H7 (MIC=2.41 ug/ml). Does not have antifungal activity against the yeast C.albicans 3153A. This chain is Ostricacin-3, found in Struthio camelus (Common ostrich).